We begin with the raw amino-acid sequence, 91 residues long: Small ribosomal subunit protein bS20 (91 aa).

Belongs to the bacterial ribosomal protein bS20 family.

Binds directly to 16S ribosomal RNA. This is Small ribosomal subunit protein bS20 from Caulobacter vibrioides (strain ATCC 19089 / CIP 103742 / CB 15) (Caulobacter crescentus).